A 398-amino-acid chain; its full sequence is Acetate kinase (398 aa).

N7 is a binding site for Mg(2+). An ATP-binding site is contributed by K14. A substrate-binding site is contributed by R90. The active-site Proton donor/acceptor is the D147. Residues 207–211 (HLGNG), 282–284 (DMR), and 330–334 (GIGEN) contribute to the ATP site. E383 is a binding site for Mg(2+).

The protein belongs to the acetokinase family. Homodimer. The cofactor is Mg(2+). It depends on Mn(2+) as a cofactor.

It is found in the cytoplasm. It catalyses the reaction acetate + ATP = acetyl phosphate + ADP. The protein operates within metabolic intermediate biosynthesis; acetyl-CoA biosynthesis; acetyl-CoA from acetate: step 1/2. Its function is as follows. Catalyzes the formation of acetyl phosphate from acetate and ATP. Can also catalyze the reverse reaction. In Symbiobacterium thermophilum (strain DSM 24528 / JCM 14929 / IAM 14863 / T), this protein is Acetate kinase.